The sequence spans 135 residues: Large ribosomal subunit protein uL16c (135 aa).

This sequence belongs to the universal ribosomal protein uL16 family. Part of the 50S ribosomal subunit.

It localises to the plastid. The protein resides in the chloroplast. This is Large ribosomal subunit protein uL16c from Gossypium hirsutum (Upland cotton).